A 382-amino-acid polypeptide reads, in one-letter code: Succinyl-diaminopimelate desuccinylase (382 aa).

His-73 lines the Zn(2+) pocket. Asp-75 is a catalytic residue. Residue Asp-106 coordinates Zn(2+). Glu-140 functions as the Proton acceptor in the catalytic mechanism. Zn(2+) is bound by residues Glu-141, Glu-169, and His-355.

Belongs to the peptidase M20A family. DapE subfamily. In terms of assembly, homodimer. Zn(2+) serves as cofactor. It depends on Co(2+) as a cofactor.

The enzyme catalyses N-succinyl-(2S,6S)-2,6-diaminopimelate + H2O = (2S,6S)-2,6-diaminopimelate + succinate. The protein operates within amino-acid biosynthesis; L-lysine biosynthesis via DAP pathway; LL-2,6-diaminopimelate from (S)-tetrahydrodipicolinate (succinylase route): step 3/3. Catalyzes the hydrolysis of N-succinyl-L,L-diaminopimelic acid (SDAP), forming succinate and LL-2,6-diaminopimelate (DAP), an intermediate involved in the bacterial biosynthesis of lysine and meso-diaminopimelic acid, an essential component of bacterial cell walls. This chain is Succinyl-diaminopimelate desuccinylase, found in Cellvibrio japonicus (strain Ueda107) (Pseudomonas fluorescens subsp. cellulosa).